Consider the following 460-residue polypeptide: ATP synthase subunit beta (460 aa).

150 to 157 contacts ATP; sequence GGAGVGKT.

Belongs to the ATPase alpha/beta chains family. F-type ATPases have 2 components, CF(1) - the catalytic core - and CF(0) - the membrane proton channel. CF(1) has five subunits: alpha(3), beta(3), gamma(1), delta(1), epsilon(1). CF(0) has three main subunits: a(1), b(2) and c(9-12). The alpha and beta chains form an alternating ring which encloses part of the gamma chain. CF(1) is attached to CF(0) by a central stalk formed by the gamma and epsilon chains, while a peripheral stalk is formed by the delta and b chains.

Its subcellular location is the cell inner membrane. It catalyses the reaction ATP + H2O + 4 H(+)(in) = ADP + phosphate + 5 H(+)(out). In terms of biological role, produces ATP from ADP in the presence of a proton gradient across the membrane. The catalytic sites are hosted primarily by the beta subunits. In Serratia proteamaculans (strain 568), this protein is ATP synthase subunit beta.